Here is a 280-residue protein sequence, read N- to C-terminus: MHSLQRKVLRTICPDQKGLIARITNICYKHELNIVQNNEFVDHRTGRFFMRTELEGIFNDSTLLADLDSALPEGSVRELNPAGRRRIVILVTKEAHCLGDLLMKANYGGLDVEIAAVIGNHDTLRSLVERFDIPFELVSHEGLTRNEHDQKMADAIDAYQPDYVVLAKYMRVLTPEFVARFPNKIINIHHSFLPAFIGARPYHQAYERGVKIIGATAHYVNDNLDEGPIIMQDVIHVDHTYTAEDMMRAGRDVEKNVLSRALYKVLAQRVFVYGNRTIIL.

Positions 8-86 constitute an ACT domain; the sequence is VLRTICPDQK…RELNPAGRRR (79 aa). D225 is an active-site residue.

Belongs to the PurU family. As to quaternary structure, homohexamer.

It carries out the reaction (6R)-10-formyltetrahydrofolate + H2O = (6S)-5,6,7,8-tetrahydrofolate + formate + H(+). It functions in the pathway purine metabolism; IMP biosynthesis via de novo pathway; formate from 10-formyl-5,6,7,8-tetrahydrofolate: step 1/1. With respect to regulation, activated by methionine, inhibited by glycine. In terms of biological role, catalyzes the hydrolysis of 10-formyltetrahydrofolate (formyl-FH4) to formate and tetrahydrofolate (FH4). Provides the major source of formate for the PurT-dependent synthesis of 5'-phosphoribosyl-N-formylglycinamide (FGAR) during aerobic growth. Has a role in regulating the one-carbon pool. The chain is Formyltetrahydrofolate deformylase from Escherichia coli (strain K12).